The following is a 438-amino-acid chain: V-type ATP synthase beta chain (438 aa).

It belongs to the ATPase alpha/beta chains family.

Produces ATP from ADP in the presence of a proton gradient across the membrane. The V-type beta chain is a regulatory subunit. The polypeptide is V-type ATP synthase beta chain (Chlamydia felis (strain Fe/C-56) (Chlamydophila felis)).